The following is a 449-amino-acid chain: Type 3 secretion system ATPase (449 aa).

178-183 (GCGKTT) lines the ATP pocket.

This sequence belongs to the ATPase alpha/beta chains family. T3SS ATPase subfamily. In terms of assembly, the core secretion machinery of the T3SS is composed of approximately 20 different proteins, including cytoplasmic components, a base, an export apparatus and a needle. This subunit is part of the cytosolic complex. Forms homododecamers.

The protein resides in the cytoplasm. The catalysed reaction is ATP + H2O + cellular proteinSide 1 = ADP + phosphate + cellular proteinSide 2.. In terms of biological role, ATPase component of the type III secretion system (T3SS), also called injectisome, which is used to inject bacterial effector proteins into eukaryotic host cells. Acts as a molecular motor to provide the energy that is required for the export of proteins. Required for type III secretion apparatus (T3SA) formation, proper protein secretion, host cell invasion and virulence. May play a critical role in T3SS substrate recognition, disassembly of the effector/chaperone complex and unfolding of the effector in an ATP-dependent manner prior to secretion. The chain is Type 3 secretion system ATPase from Pseudomonas syringae pv. tomato (strain ATCC BAA-871 / DC3000).